The sequence spans 136 residues: MAPKAEKKPAAEKKPVETEKKPKAEKRVPGKDGGADKKKKKAKKSVETYKIYIFKVLKQVHPDIGISSKAMSIMNSFINDIFEKLAGESAKLARYNKKPTITSREIQTAVRLVLPGELAKHAVSEGTKAVTKFTSS.

Over residues 1–36 the composition is skewed to basic and acidic residues; sequence MAPKAEKKPAAEKKPVETEKKPKAEKRVPGKDGGAD. The tract at residues 1–44 is disordered; sequence MAPKAEKKPAAEKKPVETEKKPKAEKRVPGKDGGADKKKKKAKK. Lysine 7 and lysine 26 each carry N6-acetyllysine. Lysine 132 is covalently cross-linked (Glycyl lysine isopeptide (Lys-Gly) (interchain with G-Cter in ubiquitin)).

The protein belongs to the histone H2B family. In terms of assembly, the nucleosome is a histone octamer containing two molecules each of H2A, H2B, H3 and H4 assembled in one H3-H4 heterotetramer and two H2A-H2B heterodimers. The octamer wraps approximately 147 bp of DNA. Can be acetylated to form H2BK6ac and H2BK33ac. Post-translationally, monoubiquitinated to form H2BK143ub1; may give a specific tag for epigenetic transcriptional activation.

The protein resides in the nucleus. Its subcellular location is the chromosome. Core component of nucleosome. Nucleosomes wrap and compact DNA into chromatin, limiting DNA accessibility to the cellular machineries which require DNA as a template. Histones thereby play a central role in transcription regulation, DNA repair, DNA replication and chromosomal stability. DNA accessibility is regulated via a complex set of post-translational modifications of histones, also called histone code, and nucleosome remodeling. The chain is Histone H2B.5 from Triticum aestivum (Wheat).